The following is a 283-amino-acid chain: MIIDRLYENVEKKGCVCVGLDTDISYLPKGFLNKFTNIEDAIFAFNQRIVDSTFDVSACYKVQIAYYEAMGIKGMILYNKTLEYIRKKGGIVIADIKRGDISATAKMYAKAHFEGDFESDFITLNPYMGMDTLEPYKDYFKNKEKGVFLLLRTSNEGSKDIQYLDLKDNKKVYNKVGEKIENIGKEFLGNCGYSSIGAVVGCTAEENNIRKELKHTFFLIPGYGAQGGKAEVAKSYLSEGNGGIINSSRGILLAYKKYDEEGKNFEECARNEVINMKKTLQII.

K97 functions as the Proton donor in the catalytic mechanism.

The protein belongs to the OMP decarboxylase family. Type 2 subfamily.

The catalysed reaction is orotidine 5'-phosphate + H(+) = UMP + CO2. The protein operates within pyrimidine metabolism; UMP biosynthesis via de novo pathway; UMP from orotate: step 2/2. This Clostridium botulinum (strain Loch Maree / Type A3) protein is Orotidine 5'-phosphate decarboxylase.